The chain runs to 232 residues: UPF0173 metal-dependent hydrolase Msil_0741 (232 aa).

It belongs to the UPF0173 family.

In Methylocella silvestris (strain DSM 15510 / CIP 108128 / LMG 27833 / NCIMB 13906 / BL2), this protein is UPF0173 metal-dependent hydrolase Msil_0741.